Reading from the N-terminus, the 856-residue chain is DNA mismatch repair protein MutS (856 aa).

607 to 614 (GPNMSGKS) contributes to the ATP binding site.

It belongs to the DNA mismatch repair MutS family.

Its function is as follows. This protein is involved in the repair of mismatches in DNA. It is possible that it carries out the mismatch recognition step. This protein has a weak ATPase activity. The chain is DNA mismatch repair protein MutS from Lactobacillus delbrueckii subsp. bulgaricus (strain ATCC BAA-365 / Lb-18).